The chain runs to 287 residues: L-ascorbate peroxidase 3 (287 aa).

Residue A2 is modified to N-acetylalanine. H40 acts as the Proton acceptor in catalysis. A disordered region spans residues 46–66 (DAQSKTGGPNGSIRNEEEHTH). Position 160 (H160) interacts with heme b. 3 residues coordinate K(+): T161, T177, and D184. Residues 259–279 (ILAQSAFGVAVAAAVVAFGYF) form a helical membrane-spanning segment. An AKR2A-binding sequence (ABS) required for peroxisome membrane targeting motif is present at residues 281–287 (EIRKRMK).

Belongs to the peroxidase family. Ascorbate peroxidase subfamily. Interacts via its C-terminal region with AKR2A and AKR2B. Heme b is required as a cofactor.

It is found in the peroxisome membrane. The protein resides in the glyoxysome membrane. The catalysed reaction is L-ascorbate + H2O2 = L-dehydroascorbate + 2 H2O. Its function is as follows. Plays a key role in hydrogen peroxide removal. This chain is L-ascorbate peroxidase 3 (APX3), found in Arabidopsis thaliana (Mouse-ear cress).